Reading from the N-terminus, the 457-residue chain is Adenylosuccinate synthetase isozyme 2 (457 aa).

GTP is bound by residues 40–46 and 68–70; these read GDEGKGK and GHT. Aspartate 41 functions as the Proton acceptor in the catalytic mechanism. Residues aspartate 41 and glycine 68 each coordinate Mg(2+). Residue aspartate 41 participates in substrate binding. IMP is bound by residues 41 to 44, 66 to 69, threonine 163, arginine 177, asparagine 256, threonine 271, and arginine 335; these read DEGK and NAGH. Histidine 69 serves as the catalytic Proton donor. 331 to 337 provides a ligand contact to substrate; sequence VTTGRKR. GTP contacts are provided by residues arginine 337, 363–365, and 445–448; these read KLD and GVGK.

The protein belongs to the adenylosuccinate synthetase family. Homodimer. The cofactor is Mg(2+).

Its subcellular location is the cytoplasm. It is found in the mitochondrion. It carries out the reaction IMP + L-aspartate + GTP = N(6)-(1,2-dicarboxyethyl)-AMP + GDP + phosphate + 2 H(+). It participates in purine metabolism; AMP biosynthesis via de novo pathway; AMP from IMP: step 1/2. With respect to regulation, inhibited competitively by AMP and IMP and non-competitively by fructose 1,6-bisphosphate. In terms of biological role, plays an important role in the de novo pathway and in the salvage pathway of purine nucleotide biosynthesis. Catalyzes the first committed step in the biosynthesis of AMP from IMP. The sequence is that of Adenylosuccinate synthetase isozyme 2 (adss2) from Xenopus laevis (African clawed frog).